The sequence spans 98 residues: Integration host factor subunit alpha (98 aa).

Residues leucine 54–serine 74 are disordered.

The protein belongs to the bacterial histone-like protein family. In terms of assembly, heterodimer of an alpha and a beta chain.

This protein is one of the two subunits of integration host factor, a specific DNA-binding protein that functions in genetic recombination as well as in transcriptional and translational control. The polypeptide is Integration host factor subunit alpha (Actinobacillus succinogenes (strain ATCC 55618 / DSM 22257 / CCUG 43843 / 130Z)).